Here is a 116-residue protein sequence, read N- to C-terminus: Large ribosomal subunit protein bL19 (116 aa).

This sequence belongs to the bacterial ribosomal protein bL19 family.

In terms of biological role, this protein is located at the 30S-50S ribosomal subunit interface and may play a role in the structure and function of the aminoacyl-tRNA binding site. The chain is Large ribosomal subunit protein bL19 from Mannheimia succiniciproducens (strain KCTC 0769BP / MBEL55E).